Here is a 195-residue protein sequence, read N- to C-terminus: Small ribosomal subunit protein bS16 (195 aa).

Residues 171 to 181 (PEAPVAAAEPA) show a composition bias toward low complexity. The disordered stretch occupies residues 171-195 (PEAPVAAAEPAPEVKAEEKEEGGEA).

Belongs to the bacterial ribosomal protein bS16 family.

This Chlorobium luteolum (strain DSM 273 / BCRC 81028 / 2530) (Pelodictyon luteolum) protein is Small ribosomal subunit protein bS16.